The primary structure comprises 332 residues: Junctional sarcoplasmic reticulum protein 1 (332 aa).

The interval Met-1 to Thr-80 is mediates interaction with CACNA1S. Disordered stretches follow at residues Met-1–Asp-125 and Ala-159–Asp-332. Residue Thr-51 is modified to Phosphothreonine. Residues Gly-66–Gly-76 show a composition bias toward basic and acidic residues. Composition is skewed to pro residues over residues Gln-98 to Thr-116 and Ala-177 to Pro-197. Over residues Gly-221 to Ser-232 the composition is skewed to low complexity. Phosphoserine is present on residues Ser-223 and Ser-228. 2 stretches are compositionally biased toward basic and acidic residues: residues Gly-239–Lys-256 and Arg-283–Lys-307.

As to quaternary structure, interacts with CACNA1S, CACNB1 and calsequestrin. As to expression, specifically expressed in skeletal muscle. Detected in skeletal muscle and tongue (at protein level).

It is found in the sarcoplasmic reticulum membrane. It localises to the endoplasmic reticulum membrane. Functionally, involved in skeletal muscle excitation/contraction coupling (EC), probably acting as a regulator of the voltage-sensitive calcium channel CACNA1S. EC is a physiological process whereby an electrical signal (depolarization of the plasma membrane) is converted into a chemical signal, a calcium gradient, by the opening of ryanodine receptor calcium release channels. May regulate CACNA1S membrane targeting and activity. The sequence is that of Junctional sarcoplasmic reticulum protein 1 (Jsrp1) from Mus musculus (Mouse).